The following is a 1272-amino-acid chain: Myosin-binding protein C, cardiac-type (1272 aa).

Residues 95–147 (KEPEKSEPVAPAEASPAPAASELPAPPVESNQNPEVPPAETQPEEPVDPIGLF) form a disordered region. Low complexity predominate over residues 102–117 (PVAPAEASPAPAASEL). The Ig-like C2-type 1 domain maps to 137–252 (PEEPVDPIGL…NLIVNEAPVS (116 aa)). Ser265 carries the post-translational modification Phosphoserine; by PKA and PKC. Thr274 is modified (phosphothreonine; by PKA and PKC). The residue at position 300 (Ser300) is a Phosphoserine; by PKA. 4 Ig-like C2-type domains span residues 359–451 (KKST…VKEP), 452–542 (PILI…VQEK), 543–640 (KLEV…FVPR), and 644–763 (PKIH…ADIT). Fibronectin type-III domains follow at residues 772 to 868 (PPEA…IAPP) and 870 to 965 (EPTH…VQEI). An Ig-like C2-type 6 domain is found at 969–1057 (PKICVPRHLR…ENMTDTVAIT (89 aa)). The Fibronectin type-III 3 domain occupies 1066 to 1161 (PPQNIKLADV…TKNPAYIQKT (96 aa)). The residue at position 1169 (Ser1169) is a Phosphoserine; by PKC. One can recognise an Ig-like C2-type 7 domain in the interval 1179–1263 (PKFTHPLVNR…VNERGEAEIE (85 aa)).

Belongs to the immunoglobulin superfamily. MyBP family. Substrate for phosphorylation by PKA and PKC. Reversible phosphorylation appears to modulate contraction. Expressed specifically in cardiac muscle among adult tissues, but is also expressed transiently in the skeletal muscle at early developmental stages. Isoform Type I is found in embryonic skeletal muscle and isoform Type II is found in both embryonic skeletal and cardiac muscle.

Functionally, thick filament-associated protein located in the crossbridge region of vertebrate striated muscle A bands. In vitro it binds MHC, F-actin and native thin filaments, and modifies the activity of actin-activated myosin ATPase. It may modulate muscle contraction or may play a more structural role. May be involved in the early phase of myofibrillogenesis. This Gallus gallus (Chicken) protein is Myosin-binding protein C, cardiac-type (MYBPC3).